The following is a 688-amino-acid chain: Polyribonucleotide nucleotidyltransferase (688 aa).

Mg(2+) is bound by residues Asp-484 and Asp-490. The KH domain maps to 550–609; sequence PTTEIFNVAPDKIVEIIGQGGRVIKEIVEKFEVKIDLNKPSGEVKIMGNKERVLKTKEFI. Positions 626–688 constitute an S1 motif domain; that stretch reads DEVLEAQVKR…NKGKIALDLA (63 aa).

Belongs to the polyribonucleotide nucleotidyltransferase family. It depends on Mg(2+) as a cofactor.

The protein localises to the cytoplasm. It carries out the reaction RNA(n+1) + phosphate = RNA(n) + a ribonucleoside 5'-diphosphate. Functionally, involved in mRNA degradation. Catalyzes the phosphorolysis of single-stranded polyribonucleotides processively in the 3'- to 5'-direction. This chain is Polyribonucleotide nucleotidyltransferase, found in Helicobacter pylori (strain P12).